The primary structure comprises 490 residues: Sporulation-specific protein 1 (490 aa).

Positions 18–272 (YSIQSCIGRG…AYNLLSFEFV (255 aa)) constitute a Protein kinase domain. ATP is bound by residues 24-32 (IGRGNFGDV) and lysine 47. Aspartate 141 serves as the catalytic Proton acceptor.

Belongs to the protein kinase superfamily. STE Ser/Thr protein kinase family. STE20 subfamily.

It is found in the nucleus. It localises to the cytoplasm. It carries out the reaction L-seryl-[protein] + ATP = O-phospho-L-seryl-[protein] + ADP + H(+). The enzyme catalyses L-threonyl-[protein] + ATP = O-phospho-L-threonyl-[protein] + ADP + H(+). In terms of biological role, serine/threonine protein kinase required for spore wall development. This is Sporulation-specific protein 1 (SPS1) from Saccharomyces cerevisiae (strain ATCC 204508 / S288c) (Baker's yeast).